A 375-amino-acid polypeptide reads, in one-letter code: Tubulinyl-Tyr carboxypeptidase 1 (375 aa).

Over residues 1 to 33 the composition is skewed to low complexity; sequence MPGGKKVVPSGSSSASPNAAATTTAAAAAAAAA. The disordered stretch occupies residues 1 to 69; the sequence is MPGGKKVVPS…EEDLRDGGVP (69 aa). Residues 53–63 are compositionally biased toward acidic residues; sequence EEPEEEGEEDL. Residues cysteine 179, histidine 214, and serine 231 contribute to the active site. The segment at 309 to 375 is disordered; sequence RDMRLKIGKG…PDLSGYQIRV (67 aa). An involved in heparin-binding and antiangiogenic activity region spans residues 329 to 375; the sequence is KKDVSSPQRAQSSPHRRNSRSERRPSGEKKPAEPKAMPDLSGYQIRV. Basic and acidic residues predominate over residues 347 to 361; that stretch reads SRSERRPSGEKKPAE.

It belongs to the transglutaminase-like superfamily. Vasohibin family. As to quaternary structure, interacts with SVBP; interaction enhances VASH1 tyrosine carboxypeptidase activity. Ubiquitinated in vitro. In terms of tissue distribution, expressed at low level in proliferating endothelial cells at the sprouting front but highly expressed in nonproliferating endothelial cells in the termination zone.

It localises to the cytoplasm. The protein localises to the secreted. The enzyme catalyses C-terminal L-alpha-aminoacyl-L-glutamyl-L-glutamyl-L-tyrosyl-[tubulin] + H2O = C-terminal L-alpha-aminoacyl-L-glutamyl-L-glutamyl-[tubulin] + L-tyrosine. Functionally, tyrosine carboxypeptidase that removes the C-terminal tyrosine residue of alpha-tubulin, thereby regulating microtubule dynamics and function. Acts as an angiogenesis inhibitor: inhibits migration, proliferation and network formation by endothelial cells as well as angiogenesis. This inhibitory effect is selective to endothelial cells as it does not affect the migration of smooth muscle cells or fibroblasts. The protein is Tubulinyl-Tyr carboxypeptidase 1 of Mus musculus (Mouse).